The primary structure comprises 506 residues: UPF0522 protein A (506 aa).

Positions 1–18 (MIKSLLLLISIIIGIVIS) are cleaved as a signal peptide. N-linked (GlcNAc...) asparagine glycosylation is found at Asn145, Asn155, Asn330, Asn366, Asn418, and Asn427.

This sequence belongs to the UPF0522 family.

The protein localises to the secreted. In Dictyostelium discoideum (Social amoeba), this protein is UPF0522 protein A.